Here is a 137-residue protein sequence, read N- to C-terminus: Peptide methionine sulfoxide reductase MsrB (137 aa).

The region spanning 7 to 129 (AEELKKNLSE…NSASLRFTDG (123 aa)) is the MsrB domain. The Zn(2+) site is built by Cys46, Cys49, Cys95, and Cys98. The Nucleophile role is filled by Cys118.

This sequence belongs to the MsrB Met sulfoxide reductase family. Requires Zn(2+) as cofactor.

It carries out the reaction L-methionyl-[protein] + [thioredoxin]-disulfide + H2O = L-methionyl-(R)-S-oxide-[protein] + [thioredoxin]-dithiol. The chain is Peptide methionine sulfoxide reductase MsrB from Escherichia coli (strain K12 / MC4100 / BW2952).